Reading from the N-terminus, the 520-residue chain is Probable kinase 098L (520 aa).

The Protein kinase domain occupies 82 to 393 (LTSVQSFGSK…NSPLLKKGFV (312 aa)). Residues 88 to 96 (FGSKSKQGI) and K111 contribute to the ATP site. D205 acts as the Proton acceptor in catalysis. Residues 416–442 (QTAQLIETDKEILDNLIDDLELKIVRK) adopt a coiled-coil conformation.

It belongs to the protein kinase superfamily.

Its function is as follows. Probable kinase. This chain is Probable kinase 098L, found in Aedes vexans (Inland floodwater mosquito).